Here is a 556-residue protein sequence, read N- to C-terminus: Formate--tetrahydrofolate ligase (556 aa).

Residue 65–72 (TPAGEGKS) participates in ATP binding.

It belongs to the formate--tetrahydrofolate ligase family.

The enzyme catalyses (6S)-5,6,7,8-tetrahydrofolate + formate + ATP = (6R)-10-formyltetrahydrofolate + ADP + phosphate. It functions in the pathway one-carbon metabolism; tetrahydrofolate interconversion. In Streptococcus thermophilus (strain ATCC BAA-250 / LMG 18311), this protein is Formate--tetrahydrofolate ligase.